The chain runs to 485 residues: Probable glycine dehydrogenase (decarboxylating) subunit 2 (485 aa).

Residue K273 is modified to N6-(pyridoxal phosphate)lysine.

This sequence belongs to the GcvP family. C-terminal subunit subfamily. As to quaternary structure, the glycine cleavage system is composed of four proteins: P, T, L and H. In this organism, the P 'protein' is a heterodimer of two subunits. Pyridoxal 5'-phosphate serves as cofactor.

The enzyme catalyses N(6)-[(R)-lipoyl]-L-lysyl-[glycine-cleavage complex H protein] + glycine + H(+) = N(6)-[(R)-S(8)-aminomethyldihydrolipoyl]-L-lysyl-[glycine-cleavage complex H protein] + CO2. Functionally, the glycine cleavage system catalyzes the degradation of glycine. The P protein binds the alpha-amino group of glycine through its pyridoxal phosphate cofactor; CO(2) is released and the remaining methylamine moiety is then transferred to the lipoamide cofactor of the H protein. The protein is Probable glycine dehydrogenase (decarboxylating) subunit 2 of Caldanaerobacter subterraneus subsp. tengcongensis (strain DSM 15242 / JCM 11007 / NBRC 100824 / MB4) (Thermoanaerobacter tengcongensis).